Here is a 315-residue protein sequence, read N- to C-terminus: Malate dehydrogenase (315 aa).

Residues 10-15 (GSGFTG) and Asp34 contribute to the NAD(+) site. Substrate is bound by residues Arg85 and Arg91. NAD(+)-binding positions include Asn98 and 121 to 123 (LTN). Substrate contacts are provided by Asn123 and Arg154. The active-site Proton acceptor is the His178.

The protein belongs to the LDH/MDH superfamily. MDH type 3 family.

The catalysed reaction is (S)-malate + NAD(+) = oxaloacetate + NADH + H(+). Catalyzes the reversible oxidation of malate to oxaloacetate. The sequence is that of Malate dehydrogenase from Symbiobacterium thermophilum (strain DSM 24528 / JCM 14929 / IAM 14863 / T).